A 379-amino-acid polypeptide reads, in one-letter code: Epoxyqueuosine reductase (379 aa).

D140 serves as the catalytic Proton donor. Positions 184 to 214 (FEPDTPASDLCGSCNQCVKACPTGSLLGEGK) constitute a 4Fe-4S ferredoxin-type domain. Residues C194, C197, C200, C204, C220, C246, C249, and C253 each coordinate [4Fe-4S] cluster. Residues 307-332 (QRNAIIILARYKDKTAVPDLIDCLQN) form an HEAT-like PBS-type repeat.

This sequence belongs to the QueG family. As to quaternary structure, monomer. Cob(II)alamin serves as cofactor. Requires [4Fe-4S] cluster as cofactor.

It localises to the cytoplasm. The catalysed reaction is epoxyqueuosine(34) in tRNA + AH2 = queuosine(34) in tRNA + A + H2O. It participates in tRNA modification; tRNA-queuosine biosynthesis. Functionally, catalyzes the conversion of epoxyqueuosine (oQ) to queuosine (Q), which is a hypermodified base found in the wobble positions of tRNA(Asp), tRNA(Asn), tRNA(His) and tRNA(Tyr). The sequence is that of Epoxyqueuosine reductase from Listeria monocytogenes serovar 1/2a (strain ATCC BAA-679 / EGD-e).